The following is an 89-amino-acid chain: Small ribosomal subunit protein uS19 (89 aa).

This sequence belongs to the universal ribosomal protein uS19 family.

Its function is as follows. Protein S19 forms a complex with S13 that binds strongly to the 16S ribosomal RNA. This is Small ribosomal subunit protein uS19 from Brachyspira hyodysenteriae (strain ATCC 49526 / WA1).